Consider the following 132-residue polypeptide: ATP synthase epsilon chain (132 aa).

Belongs to the ATPase epsilon chain family. In terms of assembly, F-type ATPases have 2 components, CF(1) - the catalytic core - and CF(0) - the membrane proton channel. CF(1) has five subunits: alpha(3), beta(3), gamma(1), delta(1), epsilon(1). CF(0) has three main subunits: a, b and c.

The protein resides in the cell membrane. Its function is as follows. Produces ATP from ADP in the presence of a proton gradient across the membrane. In Desulfitobacterium hafniense (strain Y51), this protein is ATP synthase epsilon chain.